A 1249-amino-acid chain; its full sequence is MAQTNGELEHSKETPEQLTNGNHPEETQEEDNTGGLFQITVKLPHEPYKIQVMVSSQEQVQDVRQSIVELPSTFQYTCFHLEFNGQRINDFVELSEVPDLKADSEITLVEDPYNEKEARMHVVRMRELVGAAGDRVDNLHGISAGLSLHDAISAEVADASEKEHSLSKYDITSSPSLKTILPRAEAPLPKTVKAISLSPWNPVPYHLRQKGHLLYLQVTTNEGEQFQITSHISGFYVNKNSNMKFDPSPKTIPKSGRAHSLLTLIAHLSPSFNASFEALQESNNKKDLLTTFPFQNAIPNNPWLVPPPTSTANAHQPDITRSQENYLISGVDNAETLRDWNEEFQTTRELPRETVQDRVFRERLTSKLFADYNEAAARGAVLVARGEVAPLNPTESRDAQIFVYNNIFYSFGADGVGTFASEGGDEAARVAVGKDVVGIKAVNQLDINGLFTPGTVVVDYLGKRIVGQSIVPGIFKQREPGEHQIDYGGVEGKDVVATHPDFVSVFEKMSKALRVKKHAVWDKEGQRHELEGSVETKGLLGTDGRKYVLDLYRVTPLDVMWQEEEGSDAYPHRMSVLRLELVESYWRHKMSQYVKAEVERRRSAKAEADAAKAESSEATESKEQASEEKSEEDQERVDISGFSLALNPDVCSGQVPQTDEEKEQWAQDEKEVRETCDYLRSKIMPELIQDLHDGDVGFPMDGQSLSQLLHKRGINIRYLGKLAQLSKEKGSRLDALSTLLVQEMIARAFKHIANEYLRNVPAPFVASCISHLLNCLLGADVNPNPVAEIDASLRSIYPEGDFSFEKATPATLRAAIEKQVTIRYRFTLEAEWFNSLRHLQLLRDLSIKLGLQLGAREFIFDKSQIPAKAPATNGANGVAQEEGKNKKKKKGGDSSSPARAAKEEKPILAIVPDDILNIVPLVKDASPRSSLAEEALEAGRISLMQNQKQLGQELILESLSLHEQIYGILHPEVAKLYHQLSMLYYQTDEKEAAVELARKAVIVTERTLGVDSADTILSYLNLSLFEHASGNTKTALAYIKHAMDLWKIIYGANHPDSITTMNNAAVMLQHLKQYSDSRKWFEASLEVCESLFGRQSINTATILFQLAQALALDQDSKGAVGKMRDAYNIFLSQLGPNDRNTKEAETWLEQLTQNAVSIAKHAKDIQARRLRRVNMNPRSLGTKIQPQVGQTAPEVAGARAPGSASLDSRSVDELLKFIEGGDAGSSKAKQKKRAAASNPKLRGSKKSSA.

The segment at Met1–Asn32 is disordered. The region spanning Asp318 to Gln562 is the Clu domain. Residues Lys605–Glu628 are compositionally biased toward basic and acidic residues. 2 disordered regions span residues Lys605 to Arg636 and Lys868 to Glu903. TPR repeat units lie at residues Ala974–Thr1007, Ile1016–Ile1049, and Ile1058–Leu1091. Residues Asn1174 to Ala1249 are disordered. Over residues Asn1176–Gln1190 the composition is skewed to polar residues.

Belongs to the CLU family. May associate with the eukaryotic translation initiation factor 3 (eIF-3) complex.

It localises to the cytoplasm. MRNA-binding protein involved in proper cytoplasmic distribution of mitochondria. The sequence is that of Clustered mitochondria protein homolog from Aspergillus niger (strain ATCC MYA-4892 / CBS 513.88 / FGSC A1513).